Reading from the N-terminus, the 364-residue chain is Inner membrane ABC transporter permease protein YejB (364 aa).

The Periplasmic segment spans residues 1–8 (MGAYLIRR). Residues 9–29 (LLLVIPTLWAIITINFFIVQI) form a helical membrane-spanning segment. At 30–37 (APGGPVDQ) the chain is on the cytoplasmic side. Residues 38–58 (AIAAIEFGNAGVLPGAGGEGV) traverse the membrane as a helical segment. Over 59–135 (RASHAQTGVG…LTLIKDSLPV (77 aa)) the chain is Periplasmic. In terms of domain architecture, ABC transmembrane type-1 spans 133–348 (LPVSITLGLW…LIGLLLNIVS (216 aa)). Residues 136 to 156 (SITLGLWSTLIIYLVSIPLGI) traverse the membrane as a helical segment. The Cytoplasmic portion of the chain corresponds to 157–172 (RKAVYNGSRFDVWSSA). A helical membrane pass occupies residues 173-193 (FIIIGYAIPAFLFAILLIVFF). At 194 to 224 (AGGSYFDLFPLRGLVSANFDSLPWYQKITDY) the chain is on the periplasmic side. Residues 225-245 (LWHITLPVLATVIGGFAALTM) traverse the membrane as a helical segment. The Cytoplasmic portion of the chain corresponds to 246–284 (LTKNSFLDEVRKQYVVTARAKGVSEKNILWKHVFRNAML). Residues 285 to 305 (LVIAGFPATFISMFFTGSLLI) traverse the membrane as a helical segment. Residues 306–326 (EVMFSLNGLGLLGYEATVSRD) are Periplasmic-facing. Residues 327–347 (YPVMFGTLYIFTLIGLLLNIV) form a helical membrane-spanning segment. Topologically, residues 348–364 (SDISYTLVDPRIDFEGR) are cytoplasmic.

It belongs to the binding-protein-dependent transport system permease family. OppBC subfamily.

Its subcellular location is the cell inner membrane. Functionally, probably part of a binding-protein-dependent transport system. Probably responsible for the translocation of the substrate across the membrane. This Escherichia coli O157:H7 protein is Inner membrane ABC transporter permease protein YejB (yejB).